The chain runs to 621 residues: Chaperone protein HtpG (621 aa).

The segment at 1–341 (MSNQEYTFQT…SEDLPLNVSR (341 aa)) is a; substrate-binding. The tract at residues 342–547 (EILQQNKILA…GDEQNAMMAN (206 aa)) is b. Residues 548–621 (FMRQMGQSVP…RLNSVLLKAL (74 aa)) form a c region.

It belongs to the heat shock protein 90 family. Homodimer.

The protein resides in the cytoplasm. Its function is as follows. Molecular chaperone. Has ATPase activity. In Helicobacter pylori (strain HPAG1), this protein is Chaperone protein HtpG.